Reading from the N-terminus, the 314-residue chain is Acetaldehyde dehydrogenase 4 (314 aa).

Residue 15–18 (SGNI) coordinates NAD(+). Cys133 acts as the Acyl-thioester intermediate in catalysis. NAD(+) contacts are provided by residues 164–172 (SAGPGTRAN) and Asn292.

The protein belongs to the acetaldehyde dehydrogenase family.

The catalysed reaction is acetaldehyde + NAD(+) + CoA = acetyl-CoA + NADH + H(+). The chain is Acetaldehyde dehydrogenase 4 from Burkholderia lata (strain ATCC 17760 / DSM 23089 / LMG 22485 / NCIMB 9086 / R18194 / 383).